Reading from the N-terminus, the 278-residue chain is UPF0758 protein BURPS1106A_0984 (278 aa).

Positions 1–64 (MQYEIVSAGE…ATAAARRGRD (64 aa)) are disordered. The span at 22–59 (AAAPAAPSSAVPSSAALSSAALSSAAQPTGAPPATAAA) shows a compositional bias: low complexity. Positions 156–278 (LVDSPGAVDD…TFSFAQAGWI (123 aa)) constitute an MPN domain. 3 residues coordinate Zn(2+): His-227, His-229, and Asp-240. A JAMM motif motif is present at residues 227–240 (HNHPSGAVRPSAAD).

Belongs to the UPF0758 family.

In Burkholderia pseudomallei (strain 1106a), this protein is UPF0758 protein BURPS1106A_0984.